We begin with the raw amino-acid sequence, 249 residues long: MPFEIVFDGAKDFADLIATASNLIDEAAFKITEEGISMRAMDPSRVVLIDLNLPESIFSKYEVEEEETVGINMDHFKKILKRGKNKDTLILRKGDENFLEITFEGTAKRTFRLPLIEVEELELDLPELPFTAKVVVLGEVLKEAVKDASLVSDALKFIARENEFIMKAEGETNEVEIKLTLEDEGLLDLEVEEETKSAYGISYLADMIKGIGKADEVIIRFGNEMPLQMEYPIRDEGKLIFLLAPRVED.

This sequence belongs to the PCNA family. Homotrimer. The subunits circularize to form a toroid; DNA passes through its center. Replication factor C (RFC) is required to load the toroid on the DNA.

In terms of biological role, sliding clamp subunit that acts as a moving platform for DNA processing. Responsible for tethering the catalytic subunit of DNA polymerase and other proteins to DNA during high-speed replication. The protein is DNA polymerase sliding clamp of Thermococcus onnurineus (strain NA1).